The primary structure comprises 255 residues: uncharacterized protein (255 aa).

A divalent metal cation is bound by residues His-6, His-8, Glu-92, His-128, His-153, and Asp-203.

It belongs to the metallo-dependent hydrolases superfamily. TatD-type hydrolase family. A divalent metal cation is required as a cofactor.

This is an uncharacterized protein from Bacillus subtilis (strain 168).